The primary structure comprises 574 residues: ATP-grasp enzyme fsqD (574 aa).

The ATP-grasp domain maps to 234–462; that stretch reads NKFLTSKYVG…YWGLAAVLGV (229 aa). Position 263–318 (263–318) interacts with ATP; the sequence is ALPYPLIVKPCDGWSSEGVSRVESPDAFPAAVKSIDTSRHGTEFVMEPYCDGPEVD. E394, E431, and N433 together coordinate Mg(2+). Mn(2+) is bound by residues E394, E431, and N433.

The cofactor is Mg(2+). Mn(2+) serves as cofactor.

The protein operates within secondary metabolite biosynthesis. ATP-grasp enzyme; part of the gene cluster that mediates the biosynthesis of the isoquinoline alkaloids fumisoquin A, fumisoquin B and fumisoquin C; as well as small amounts of fumipyrrole as a shunt metabolite. The products of the cluster lead to a brown coloration and are important for growth and conidiation. The nonribosomal peptide synthetase-like protein fsqF, which lacks a canonical condensation domain, is required for addition of a serine-derived dehydroalanine moiety to activated tyrosine but is not essential for the subsequent steps leading to isoquinoline formation. A different enzyme, most likely the ATP-grasp enzyme fsqD, is responsible for activation of tyrosine. Three additional enzymes encoded by the fsq cluster, the N-methyltransferase fsqC, the phenol 2-monooxygenase fsqG and the FAD-dependent oxidase fsqB, catalyze the formation of the isoquinoline ring system in the fumisoquins. FsqB converts the fspF thiolation domain-bound (2S,4S,5S)-2-amino-6-(3,4-dihydroxyphenyl)-4-hydroxy-5-(methylamino)hexanoyl into isoquinoline. The cyclization most likely proceeds via a two-step mechanism, beginning with FAD-dependent oxidation of the methyl group to an iminium species followed by electrophilic attack on the deprotonated phenol. This is ATP-grasp enzyme fsqD from Aspergillus fumigatus (strain ATCC MYA-4609 / CBS 101355 / FGSC A1100 / Af293) (Neosartorya fumigata).